The chain runs to 37 residues: Mu-agatoxin-Aa1b (37 aa).

Intrachain disulfides connect Cys-2–Cys-18, Cys-9–Cys-23, Cys-17–Cys-33, and Cys-25–Cys-31. A Serine amide modification is found at Ser-37.

The protein belongs to the neurotoxin 07 (Beta/delta-agtx) family. 01 (aga-2) subfamily. As to expression, expressed by the venom gland.

The protein localises to the secreted. Insecticidal neurotoxin that induces an irreversible spastic paralysis when injected into insects. Modifies presynaptic voltage-gated sodium channels (Nav), causing them to open at the normal resting potential of the nerve. This leads to spontaneous release of neurotransmitter and repetitive action potentials in motor neurons. In Agelenopsis aperta (North American funnel-web spider), this protein is Mu-agatoxin-Aa1b.